We begin with the raw amino-acid sequence, 393 residues long: NAD(P)H-quinone oxidoreductase subunit H, chloroplastic (393 aa).

It belongs to the complex I 49 kDa subunit family. In terms of assembly, NDH is composed of at least 16 different subunits, 5 of which are encoded in the nucleus.

It localises to the plastid. It is found in the chloroplast thylakoid membrane. It catalyses the reaction a plastoquinone + NADH + (n+1) H(+)(in) = a plastoquinol + NAD(+) + n H(+)(out). The catalysed reaction is a plastoquinone + NADPH + (n+1) H(+)(in) = a plastoquinol + NADP(+) + n H(+)(out). Functionally, NDH shuttles electrons from NAD(P)H:plastoquinone, via FMN and iron-sulfur (Fe-S) centers, to quinones in the photosynthetic chain and possibly in a chloroplast respiratory chain. The immediate electron acceptor for the enzyme in this species is believed to be plastoquinone. Couples the redox reaction to proton translocation, and thus conserves the redox energy in a proton gradient. The protein is NAD(P)H-quinone oxidoreductase subunit H, chloroplastic of Spinacia oleracea (Spinach).